The primary structure comprises 272 residues: Shikimate dehydrogenase (NADP(+)) (272 aa).

Shikimate contacts are provided by residues 14–16 (SKS) and T61. Catalysis depends on K65, which acts as the Proton acceptor. E77 contributes to the NADP(+) binding site. Residues N86 and D102 each coordinate shikimate. NADP(+) contacts are provided by residues 126-130 (GAGGA), 149-154 (NRTASR), and M213. Y215 provides a ligand contact to shikimate. An NADP(+)-binding site is contributed by G237.

This sequence belongs to the shikimate dehydrogenase family. In terms of assembly, homodimer.

It carries out the reaction shikimate + NADP(+) = 3-dehydroshikimate + NADPH + H(+). It participates in metabolic intermediate biosynthesis; chorismate biosynthesis; chorismate from D-erythrose 4-phosphate and phosphoenolpyruvate: step 4/7. In terms of biological role, involved in the biosynthesis of the chorismate, which leads to the biosynthesis of aromatic amino acids. Catalyzes the reversible NADPH linked reduction of 3-dehydroshikimate (DHSA) to yield shikimate (SA). This chain is Shikimate dehydrogenase (NADP(+)), found in Salmonella schwarzengrund (strain CVM19633).